Here is a 1162-residue protein sequence, read N- to C-terminus: Paired amphipathic helix protein Sin3-like 5 (1162 aa).

The tract at residues 1–37 (MKRVREEVYVEPQMRGPTVSSRGETNGRPSTISGGGT) is disordered. Over residues 18-30 (TVSSRGETNGRPS) the composition is skewed to polar residues. PAH domains lie at 28-109 (RPST…LPKG) and 123-193 (KPVD…LPDF). Disordered regions lie at residues 702 to 727 (RVSDVSMGGHKVEREEGELSPTESCE), 743 to 779 (QKLPDNEISNTDREPKEGACGTEAVTRSNALPEDDDN), 803 to 830 (GGQVSSDEEHKGAESENEAGGMVNSNEG), and 1121 to 1143 (KKATLNPTGPENVKTSDSSELSR). Serine 817 is subject to Phosphoserine. Polar residues predominate over residues 1123–1139 (ATLNPTGPENVKTSDSS).

The protein localises to the nucleus. In terms of biological role, acts as a transcriptional repressor. Plays roles in regulating gene expression and genome stability. The polypeptide is Paired amphipathic helix protein Sin3-like 5 (SNL5) (Arabidopsis thaliana (Mouse-ear cress)).